A 251-amino-acid chain; its full sequence is Triosephosphate isomerase (251 aa).

9–11 (NWK) contributes to the substrate binding site. His-96 functions as the Electrophile in the catalytic mechanism. Glu-167 serves as the catalytic Proton acceptor. Residues Gly-173, Ser-213, and 234–235 (GG) contribute to the substrate site.

Belongs to the triosephosphate isomerase family. As to quaternary structure, homodimer.

Its subcellular location is the cytoplasm. The catalysed reaction is D-glyceraldehyde 3-phosphate = dihydroxyacetone phosphate. Its pathway is carbohydrate biosynthesis; gluconeogenesis. The protein operates within carbohydrate degradation; glycolysis; D-glyceraldehyde 3-phosphate from glycerone phosphate: step 1/1. Its function is as follows. Involved in the gluconeogenesis. Catalyzes stereospecifically the conversion of dihydroxyacetone phosphate (DHAP) to D-glyceraldehyde-3-phosphate (G3P). In Phocaeicola vulgatus (strain ATCC 8482 / DSM 1447 / JCM 5826 / CCUG 4940 / NBRC 14291 / NCTC 11154) (Bacteroides vulgatus), this protein is Triosephosphate isomerase.